The chain runs to 225 residues: UPF0758 protein XC_3944 (225 aa).

An MPN domain is found at 102–224 (ALSDPSSVGR…PVSLAERGWV (123 aa)). Zn(2+) is bound by residues His-173, His-175, and Asp-186. The short motif at 173-186 (HNHPSGNPEPSEAD) is the JAMM motif element.

Belongs to the UPF0758 family.

The chain is UPF0758 protein XC_3944 from Xanthomonas campestris pv. campestris (strain 8004).